The chain runs to 257 residues: Putative phosphatase YkrA (257 aa).

Residue Asp-9 is the Nucleophile of the active site. Position 9 (Asp-9) interacts with Mg(2+). Ile-10 lines the phosphate pocket. Residue Asp-11 participates in Mg(2+) binding. Phosphate-binding positions include 43 to 44 (SG) and Lys-183. Residue Asp-206 participates in Mg(2+) binding. Residue Asn-209 participates in phosphate binding.

It belongs to the HAD-like hydrolase superfamily. Cof family. Requires Mg(2+) as cofactor.

The chain is Putative phosphatase YkrA (ykrA) from Bacillus subtilis (strain 168).